Here is a 409-residue protein sequence, read N- to C-terminus: Testis-expressed protein 13A (409 aa).

The interval 92–408 is required for repression of transcription; sequence WLHGFAKLHK…CGKGIWLQKP (317 aa). Residues 347–374 are disordered; the sequence is GGPHRIDHQEHPRDRRYSEPHQQRPPVY. Positions 348 to 368 are enriched in basic and acidic residues; sequence GPHRIDHQEHPRDRRYSEPHQ. Residues 376 to 400 form a RanBP2-type zinc finger; that stretch reads RPGDWDCPWCNAVNFSRRDTCFDCG. Cys-382, Cys-385, Cys-396, and Cys-399 together coordinate Zn(2+).

It belongs to the TEX13 family. As to quaternary structure, interacts with CNOT1; the interaction may inhibit CNOT1 binding to mRNA and subsequently CNOT1-mediated mRNA degradation. In terms of tissue distribution, testis specific.

Functionally, binds to ssRNA containing the consensus sequence 5'-AGGUAA-3'. Plays a role in transcriptional repression. Required for rapid sperm motility and timely degradation of mRNA via its interaction with CNOT1. The protein is Testis-expressed protein 13A of Homo sapiens (Human).